The primary structure comprises 274 residues: Thiamine kinase (274 aa).

It belongs to the thiamine kinase family.

The enzyme catalyses thiamine + ATP = thiamine phosphate + ADP + H(+). It functions in the pathway cofactor biosynthesis; thiamine diphosphate biosynthesis; thiamine phosphate from thiamine: step 1/1. In terms of biological role, catalyzes the ATP-dependent phosphorylation of thiamine to thiamine phosphate. Is involved in thiamine salvage. This is Thiamine kinase from Salmonella typhi.